The sequence spans 493 residues: Transcript termination protein A18 (493 aa).

One can recognise a Helicase ATP-binding domain in the interval 100-256; sequence MIELKRPLYI…NSIINIAKLS (157 aa). Residue 113–120 participates in ATP binding; that stretch reads LACGFGKT. The DESH box signature appears at 206–209; that stretch reads DESH. The region spanning 309–456 is the Helicase C-terminal domain; that stretch reads ILDTLVEEFK…IISLSVDKLG (148 aa).

This sequence belongs to the helicase family. Poxviruses subfamily. Interacts with G2. Might be part of a transcription complex composed at least of G2, A18, and H5.

The protein localises to the virion. In terms of biological role, DNA helicase which seems to act as a postreplicative transcription termination factor. Involved in ATP-dependent release of nascent RNA. Forms a stable complex with single-stranded DNA, and to a lesser extent RNA. In Mus musculus (Mouse), this protein is Transcript termination protein A18.